The primary structure comprises 142 residues: Putative pre-16S rRNA nuclease (142 aa).

This sequence belongs to the YqgF nuclease family.

The protein localises to the cytoplasm. Functionally, could be a nuclease involved in processing of the 5'-end of pre-16S rRNA. In Ruminiclostridium cellulolyticum (strain ATCC 35319 / DSM 5812 / JCM 6584 / H10) (Clostridium cellulolyticum), this protein is Putative pre-16S rRNA nuclease.